The primary structure comprises 425 residues: Isocitrate dehydrogenase [NADP] (425 aa).

Thr114 lines the NADP(+) pocket. D-threo-isocitrate is bound by residues Ser123, Asn125, Arg129, Arg139, and Arg162. Asp316 contributes to the Mg(2+) binding site. NADP(+) contacts are provided by residues 348-354, Asn361, Tyr400, and Arg404; that span reads HGTAPKY.

It belongs to the isocitrate and isopropylmalate dehydrogenases family. Homodimer. Requires Mg(2+) as cofactor. Mn(2+) is required as a cofactor.

It carries out the reaction D-threo-isocitrate + NADP(+) = 2-oxoglutarate + CO2 + NADPH. In terms of biological role, catalyzes the oxidative decarboxylation of isocitrate to 2-oxoglutarate and carbon dioxide with the concomitant reduction of NADP(+). This chain is Isocitrate dehydrogenase [NADP] (icd), found in Helicobacter pylori (strain J99 / ATCC 700824) (Campylobacter pylori J99).